We begin with the raw amino-acid sequence, 510 residues long: Beta-glucosidase 34 (510 aa).

An N-terminal signal peptide occupies residues 1–26 (MGNGGRCMVEVVILLVLMAMSQGCDA). A glycan (N-linked (GlcNAc...) asparagine) is linked at asparagine 28. An a beta-D-glucoside-binding site is contributed by glutamine 52. Asparagine 120 carries an N-linked (GlcNAc...) asparagine glycan. A beta-D-glucoside is bound by residues histidine 153 and 198–199 (NE). Residue glutamate 199 is the Proton donor of the active site. Cysteines 218 and 226 form a disulfide. 2 N-linked (GlcNAc...) asparagine glycosylation sites follow: asparagine 279 and asparagine 331. Tyrosine 342 is an a beta-D-glucoside binding site. N-linked (GlcNAc...) asparagine glycosylation is present at asparagine 360. A beta-D-glucoside contacts are provided by residues glutamate 415, tryptophan 465, 472–473 (EW), and phenylalanine 481. The active-site Nucleophile is glutamate 415.

Belongs to the glycosyl hydrolase 1 family.

The enzyme catalyses Hydrolysis of terminal, non-reducing beta-D-glucosyl residues with release of beta-D-glucose.. The sequence is that of Beta-glucosidase 34 (BGLU34) from Oryza sativa subsp. japonica (Rice).